We begin with the raw amino-acid sequence, 926 residues long: Isoleucine--tRNA ligase (926 aa).

The disordered stretch occupies residues 1 to 21 (MKMKETLQLGKTAFPMRGNLP). Residues 57-67 (PYANGNIHLGH) carry the 'HIGH' region motif. L-isoleucyl-5'-AMP is bound at residue glutamate 552. The short motif at 593-597 (KMSKS) is the 'KMSKS' region element. Residue lysine 596 participates in ATP binding. Residues cysteine 886, cysteine 889, cysteine 906, and cysteine 909 each coordinate Zn(2+).

Belongs to the class-I aminoacyl-tRNA synthetase family. IleS type 1 subfamily. In terms of assembly, monomer. Zn(2+) serves as cofactor.

It localises to the cytoplasm. The catalysed reaction is tRNA(Ile) + L-isoleucine + ATP = L-isoleucyl-tRNA(Ile) + AMP + diphosphate. Its function is as follows. Catalyzes the attachment of isoleucine to tRNA(Ile). As IleRS can inadvertently accommodate and process structurally similar amino acids such as valine, to avoid such errors it has two additional distinct tRNA(Ile)-dependent editing activities. One activity is designated as 'pretransfer' editing and involves the hydrolysis of activated Val-AMP. The other activity is designated 'posttransfer' editing and involves deacylation of mischarged Val-tRNA(Ile). The protein is Isoleucine--tRNA ligase of Enterococcus faecalis (strain ATCC 700802 / V583).